The following is a 518-amino-acid chain: MTAYKPYRHQLRRSLFASTIFPVFLVIIIGLVSFYAIYIWIEHRTIHQHVDESQSSLHHTEKQIQTFITQHNNSFQELDLTNHHDVTATKRELLKLIHQQPATLYYELSGPNQFITNNYEHLNTKNMYLFSTHQLKFNNSTYMLKIYMANTPRLSEIKKDSRQFALIVDQYDNILYANDDRFTIGEKYRPQQFGFMNESVKLNHADHRLIIYKDIHENIEDGITLLIVMAVVLVLLVIFGFISADNMAKRQTKDIETIIQKIYYAKNRHLGTYTPLKNNSELEEINNYIYDLFESNEQLIHSIEHTERRLRDIQLKEIERQFQPHFLFNTMQTIQYLITLSPKLAQTVVQQLSQMLRYSLRTNSHTVELNEELNYIEQYVAIQNIRFDDMIKLHIESSEEARHQTIGKMMLQPLIENAIKHGRDTESLDITIRLTLARQNLHVLVCDNGIGMSSSRLQYVRQSLNNDVFDTKHLGLNHLHNKAMIQYGSHARLHIFSKRNQGTLICYKIPLSRGNVDV.

Transmembrane regions (helical) follow at residues 20–40 (IFPV…IYIW) and 222–242 (GITL…FGFI). Positions 297–513 (EQLIHSIEHT…LICYKIPLSR (217 aa)) constitute a Histidine kinase domain. The residue at position 325 (H325) is a Phosphohistidine; by autocatalysis.

In terms of processing, autophosphorylated.

The protein resides in the cell membrane. It carries out the reaction ATP + protein L-histidine = ADP + protein N-phospho-L-histidine.. In terms of biological role, member of the two-component regulatory system HptS/HptR that regulates genes involved in hexose phosphate transport system in response to changes in extracellular phosphate sources. May act as a sensor protein kinase which is autophosphorylated at a histidine residue and transfers its phosphate group to the conserved aspartic acid residue in the regulatory domain of HptS. In turn, HptS antagonizes CcpA-dependent transcription of a subset of CcpA-regulated genes involved in antibiotic susceptibility. The polypeptide is Sensor protein kinase HptS (hptS) (Staphylococcus aureus (strain Mu50 / ATCC 700699)).